The primary structure comprises 189 residues: Chitin synthase 2 (189 aa).

This sequence belongs to the chitin synthase family. Class II subfamily.

It localises to the cell membrane. The catalysed reaction is [(1-&gt;4)-N-acetyl-beta-D-glucosaminyl](n) + UDP-N-acetyl-alpha-D-glucosamine = [(1-&gt;4)-N-acetyl-beta-D-glucosaminyl](n+1) + UDP + H(+). In terms of biological role, polymerizes chitin, a structural polymer of the cell wall and septum, by transferring the sugar moiety of UDP-GlcNAc to the non-reducing end of the growing chitin polymer. The chain is Chitin synthase 2 (CHS2) from Ajellomyces dermatitidis (Blastomyces dermatitidis).